The chain runs to 230 residues: Orotidine 5'-phosphate decarboxylase (230 aa).

Substrate-binding positions include Asp-11, Lys-34, 61-70, Thr-117, Arg-179, Gln-188, Gly-208, and Arg-209; that span reads DLKLHDIPNT. Lys-63 functions as the Proton donor in the catalytic mechanism.

It belongs to the OMP decarboxylase family. Type 1 subfamily. Homodimer.

It carries out the reaction orotidine 5'-phosphate + H(+) = UMP + CO2. It participates in pyrimidine metabolism; UMP biosynthesis via de novo pathway; UMP from orotate: step 2/2. Functionally, catalyzes the decarboxylation of orotidine 5'-monophosphate (OMP) to uridine 5'-monophosphate (UMP). The polypeptide is Orotidine 5'-phosphate decarboxylase (Streptococcus mutans serotype c (strain ATCC 700610 / UA159)).